Consider the following 95-residue polypeptide: Integration host factor subunit beta (95 aa).

The protein belongs to the bacterial histone-like protein family. Heterodimer of an alpha and a beta chain.

Functionally, this protein is one of the two subunits of integration host factor, a specific DNA-binding protein that functions in genetic recombination as well as in transcriptional and translational control. This chain is Integration host factor subunit beta, found in Erwinia tasmaniensis (strain DSM 17950 / CFBP 7177 / CIP 109463 / NCPPB 4357 / Et1/99).